A 534-amino-acid polypeptide reads, in one-letter code: CTP synthase (534 aa).

Residues 1–265 form an amidoligase domain region; sequence MKYIVVTGGV…TTQLMKHLRL (265 aa). Ser12 serves as a coordination point for CTP. Ser12 is a UTP binding site. ATP is bound at residue 13 to 18; it reads GLGKGI. Residue Tyr53 participates in L-glutamine binding. An ATP-binding site is contributed by Asp70. Mg(2+)-binding residues include Asp70 and Glu140. Residues 147-149, 186-191, and Lys222 each bind CTP; these read DIE and KTKPTQ. UTP-binding positions include 186-191 and Lys222; that span reads KTKPTQ. The Glutamine amidotransferase type-1 domain occupies 289 to 530; it reads KLAIVGKYTN…VRAMCKYRKE (242 aa). Position 352 (Gly352) interacts with L-glutamine. The active-site Nucleophile; for glutamine hydrolysis is Cys379. L-glutamine-binding positions include 380–383, Glu403, and Arg460; that span reads LGMQ. Residues His503 and Glu505 contribute to the active site.

The protein belongs to the CTP synthase family. Homotetramer.

The catalysed reaction is UTP + L-glutamine + ATP + H2O = CTP + L-glutamate + ADP + phosphate + 2 H(+). The enzyme catalyses L-glutamine + H2O = L-glutamate + NH4(+). It carries out the reaction UTP + NH4(+) + ATP = CTP + ADP + phosphate + 2 H(+). It functions in the pathway pyrimidine metabolism; CTP biosynthesis via de novo pathway; CTP from UDP: step 2/2. With respect to regulation, allosterically activated by GTP, when glutamine is the substrate; GTP has no effect on the reaction when ammonia is the substrate. The allosteric effector GTP functions by stabilizing the protein conformation that binds the tetrahedral intermediate(s) formed during glutamine hydrolysis. Inhibited by the product CTP, via allosteric rather than competitive inhibition. Its function is as follows. Catalyzes the ATP-dependent amination of UTP to CTP with either L-glutamine or ammonia as the source of nitrogen. Regulates intracellular CTP levels through interactions with the four ribonucleotide triphosphates. This chain is CTP synthase, found in Methanosarcina mazei (strain ATCC BAA-159 / DSM 3647 / Goe1 / Go1 / JCM 11833 / OCM 88) (Methanosarcina frisia).